Reading from the N-terminus, the 213-residue chain is Orotate phosphoribosyltransferase (213 aa).

Lysine 26 serves as a coordination point for 5-phospho-alpha-D-ribose 1-diphosphate. 34 to 35 (FF) contributes to the orotate binding site. 5-phospho-alpha-D-ribose 1-diphosphate contacts are provided by residues 72 to 73 (YK), arginine 99, lysine 100, lysine 103, histidine 105, and 124 to 132 (DDVITAGTA). Orotate-binding residues include threonine 128 and arginine 156.

It belongs to the purine/pyrimidine phosphoribosyltransferase family. PyrE subfamily. As to quaternary structure, homodimer. The cofactor is Mg(2+).

The catalysed reaction is orotidine 5'-phosphate + diphosphate = orotate + 5-phospho-alpha-D-ribose 1-diphosphate. The protein operates within pyrimidine metabolism; UMP biosynthesis via de novo pathway; UMP from orotate: step 1/2. Functionally, catalyzes the transfer of a ribosyl phosphate group from 5-phosphoribose 1-diphosphate to orotate, leading to the formation of orotidine monophosphate (OMP). The sequence is that of Orotate phosphoribosyltransferase from Serratia proteamaculans (strain 568).